Reading from the N-terminus, the 89-residue chain is MTILGSISSIGNVKSITKSNNLSSLSNSSSSTQSMNSIQCGGGCGNGGLLGGVGGLVGGVLVGTGVIIGSVLHGVGSILTGGSNNCGCN.

It belongs to the hssA/B family.

This chain is HssA/B-like protein 22 (hssl22), found in Dictyostelium discoideum (Social amoeba).